We begin with the raw amino-acid sequence, 309 residues long: Ribose-phosphate pyrophosphokinase (309 aa).

ATP contacts are provided by residues 37 to 39 and 96 to 97; these read DGE and RQ. Mg(2+) contacts are provided by H130 and D169. K192 is a catalytic residue. D-ribose 5-phosphate contacts are provided by residues R194, D218, and 222 to 226; that span reads DTAGT.

The protein belongs to the ribose-phosphate pyrophosphokinase family. Class I subfamily. Homohexamer. Mg(2+) serves as cofactor.

It is found in the cytoplasm. It catalyses the reaction D-ribose 5-phosphate + ATP = 5-phospho-alpha-D-ribose 1-diphosphate + AMP + H(+). The protein operates within metabolic intermediate biosynthesis; 5-phospho-alpha-D-ribose 1-diphosphate biosynthesis; 5-phospho-alpha-D-ribose 1-diphosphate from D-ribose 5-phosphate (route I): step 1/1. In terms of biological role, involved in the biosynthesis of the central metabolite phospho-alpha-D-ribosyl-1-pyrophosphate (PRPP) via the transfer of pyrophosphoryl group from ATP to 1-hydroxyl of ribose-5-phosphate (Rib-5-P). In Helicobacter hepaticus (strain ATCC 51449 / 3B1), this protein is Ribose-phosphate pyrophosphokinase.